Reading from the N-terminus, the 232-residue chain is Cytidylate kinase (232 aa).

19–27 (GPAGVGKTT) provides a ligand contact to ATP.

The protein belongs to the cytidylate kinase family. Type 1 subfamily.

The protein resides in the cytoplasm. It carries out the reaction CMP + ATP = CDP + ADP. The enzyme catalyses dCMP + ATP = dCDP + ADP. This chain is Cytidylate kinase, found in Nitratidesulfovibrio vulgaris (strain DP4) (Desulfovibrio vulgaris).